A 505-amino-acid polypeptide reads, in one-letter code: L-arabinose isomerase (505 aa).

Mn(2+)-binding residues include Glu308, Glu335, His352, and His453.

The protein belongs to the arabinose isomerase family. The cofactor is Mn(2+).

It carries out the reaction beta-L-arabinopyranose = L-ribulose. It participates in carbohydrate degradation; L-arabinose degradation via L-ribulose; D-xylulose 5-phosphate from L-arabinose (bacterial route): step 1/3. In terms of biological role, catalyzes the conversion of L-arabinose to L-ribulose. The protein is L-arabinose isomerase of Bifidobacterium longum (strain DJO10A).